Consider the following 287-residue polypeptide: Homoserine kinase (287 aa).

Proline 78–serine 88 is a binding site for ATP.

Belongs to the GHMP kinase family. Homoserine kinase subfamily.

Its subcellular location is the cytoplasm. It carries out the reaction L-homoserine + ATP = O-phospho-L-homoserine + ADP + H(+). Its pathway is amino-acid biosynthesis; L-threonine biosynthesis; L-threonine from L-aspartate: step 4/5. Its function is as follows. Catalyzes the ATP-dependent phosphorylation of L-homoserine to L-homoserine phosphate. The chain is Homoserine kinase from Lactobacillus acidophilus (strain ATCC 700396 / NCK56 / N2 / NCFM).